A 412-amino-acid chain; its full sequence is UPF0761 membrane protein LPC_2650 (412 aa).

The next 6 helical transmembrane spans lie at 36–56 (ALAFTSLLAVVPLMSVGLAIF), 99–119 (LSIWGVVFLIFTALLVMFTIE), 137–157 (AFLLYWAIISLAPVLLGLSLA), 177–197 (ILHYSPFFLSLIGFTFLYVVV), 210–230 (GGLVAAILFESAKHAFAYYLI), and 241–261 (AFATVPIFFIWVYWVWIITLL).

The protein belongs to the UPF0761 family.

It localises to the cell inner membrane. The chain is UPF0761 membrane protein LPC_2650 from Legionella pneumophila (strain Corby).